A 61-amino-acid chain; its full sequence is Photosystem II reaction center protein K (61 aa).

Positions 1-24 (MLNIFSLICICLNSALYSSNFFFA) are excised as a propeptide. A helical transmembrane segment spans residues 40–60 (MPVIPLFFFLLAFVWQAAVSF).

This sequence belongs to the PsbK family. In terms of assembly, PSII is composed of 1 copy each of membrane proteins PsbA, PsbB, PsbC, PsbD, PsbE, PsbF, PsbH, PsbI, PsbJ, PsbK, PsbL, PsbM, PsbT, PsbX, PsbY, PsbZ, Psb30/Ycf12, at least 3 peripheral proteins of the oxygen-evolving complex and a large number of cofactors. It forms dimeric complexes.

The protein localises to the plastid. The protein resides in the chloroplast thylakoid membrane. Its function is as follows. One of the components of the core complex of photosystem II (PSII). PSII is a light-driven water:plastoquinone oxidoreductase that uses light energy to abstract electrons from H(2)O, generating O(2) and a proton gradient subsequently used for ATP formation. It consists of a core antenna complex that captures photons, and an electron transfer chain that converts photonic excitation into a charge separation. This Vitis vinifera (Grape) protein is Photosystem II reaction center protein K.